A 263-amino-acid chain; its full sequence is Trans-aconitate 2-methyltransferase (263 aa).

This sequence belongs to the methyltransferase superfamily. Tam family.

The protein localises to the cytoplasm. The enzyme catalyses trans-aconitate + S-adenosyl-L-methionine = (E)-3-(methoxycarbonyl)pent-2-enedioate + S-adenosyl-L-homocysteine. Its function is as follows. Catalyzes the S-adenosylmethionine monomethyl esterification of trans-aconitate. The sequence is that of Trans-aconitate 2-methyltransferase from Mycobacterium marinum (strain ATCC BAA-535 / M).